We begin with the raw amino-acid sequence, 665 residues long: UvrABC system protein B (665 aa).

The Helicase ATP-binding domain occupies 25-178 (ASLQAEHRFQ…RQLLRDLTTI (154 aa)). 38-45 (GATGTGKT) is an ATP binding site. The Beta-hairpin motif lies at 91–114 (YYDYYQPEAYIPVTDTYIEKTAAI). The Helicase C-terminal domain occupies 429–595 (QVDDLLGEVR…PIVKKASNAI (167 aa)). A UVR domain is found at 626–661 (PELITQLEAQMKEAAKKLEFEEAAKYRDRIKQLRDK).

The protein belongs to the UvrB family. Forms a heterotetramer with UvrA during the search for lesions. Interacts with UvrC in an incision complex.

It localises to the cytoplasm. In terms of biological role, the UvrABC repair system catalyzes the recognition and processing of DNA lesions. A damage recognition complex composed of 2 UvrA and 2 UvrB subunits scans DNA for abnormalities. Upon binding of the UvrA(2)B(2) complex to a putative damaged site, the DNA wraps around one UvrB monomer. DNA wrap is dependent on ATP binding by UvrB and probably causes local melting of the DNA helix, facilitating insertion of UvrB beta-hairpin between the DNA strands. Then UvrB probes one DNA strand for the presence of a lesion. If a lesion is found the UvrA subunits dissociate and the UvrB-DNA preincision complex is formed. This complex is subsequently bound by UvrC and the second UvrB is released. If no lesion is found, the DNA wraps around the other UvrB subunit that will check the other stand for damage. The chain is UvrABC system protein B from Cyanothece sp. (strain PCC 7425 / ATCC 29141).